The sequence spans 482 residues: ATP synthase subunit beta (482 aa).

Residue 162–169 (GGAGVGKT) participates in ATP binding.

It belongs to the ATPase alpha/beta chains family. F-type ATPases have 2 components, CF(1) - the catalytic core - and CF(0) - the membrane proton channel. CF(1) has five subunits: alpha(3), beta(3), gamma(1), delta(1), epsilon(1). CF(0) has four main subunits: a(1), b(1), b'(1) and c(9-12).

The protein localises to the cellular thylakoid membrane. It carries out the reaction ATP + H2O + 4 H(+)(in) = ADP + phosphate + 5 H(+)(out). In terms of biological role, produces ATP from ADP in the presence of a proton gradient across the membrane. The catalytic sites are hosted primarily by the beta subunits. This Nostoc punctiforme (strain ATCC 29133 / PCC 73102) protein is ATP synthase subunit beta.